The sequence spans 1160 residues: Pesticidal crystal protein Cry1Db (1160 aa).

The protein belongs to the delta endotoxin family.

Promotes colloidosmotic lysis by binding to the midgut epithelial cells of insects. This is Pesticidal crystal protein Cry1Db (cry1Db) from Bacillus thuringiensis.